The sequence spans 218 residues: Stress response regulator protein 1 (218 aa).

In terms of domain architecture, Response regulatory spans 90 to 209 (RFLLVDDNSI…YRVVLDVVDN (120 aa)). Asp142 bears the 4-aspartylphosphate mark.

Functionally, required for stress adaptation, morphogenesis and virulence. In Meyerozyma guilliermondii (strain ATCC 6260 / CBS 566 / DSM 6381 / JCM 1539 / NBRC 10279 / NRRL Y-324) (Yeast), this protein is Stress response regulator protein 1 (SRR1).